A 275-amino-acid chain; its full sequence is Methylthioribulose-1-phosphate dehydratase (275 aa).

C125 is a substrate binding site. The Zn(2+) site is built by H143 and H145. E168 functions as the Proton donor/acceptor in the catalytic mechanism. H233 contributes to the Zn(2+) binding site.

The protein belongs to the aldolase class II family. MtnB subfamily. Requires Zn(2+) as cofactor.

It is found in the cytoplasm. The catalysed reaction is 5-(methylsulfanyl)-D-ribulose 1-phosphate = 5-methylsulfanyl-2,3-dioxopentyl phosphate + H2O. It functions in the pathway amino-acid biosynthesis; L-methionine biosynthesis via salvage pathway; L-methionine from S-methyl-5-thio-alpha-D-ribose 1-phosphate: step 2/6. Catalyzes the dehydration of methylthioribulose-1-phosphate (MTRu-1-P) into 2,3-diketo-5-methylthiopentyl-1-phosphate (DK-MTP-1-P). The polypeptide is Methylthioribulose-1-phosphate dehydratase (Lodderomyces elongisporus (strain ATCC 11503 / CBS 2605 / JCM 1781 / NBRC 1676 / NRRL YB-4239) (Yeast)).